The sequence spans 319 residues: MSRRRRFKGRDVHGILLLDKPTGLTSNDVLQKVKRIYNAAKAGHTGALDPLATGMLPICLGEATKFSQYLLEADKRYEVTAKLGERTNTSDSDGEVVSTRPVNVALGTLIESLDQFRGPIMQVPSMYSALKHNGRPLYEYAREGIEIEREARPITVFELKLISFEGDEVKLEVHCSKGTYIRSLVDDLGEVLGCGAHVTQLRRTQVATYPYERMLTLEQLECIFEQAKAESIPPREQLDPLLLPMDTAVAALPEVNMLAAVAAYVNQGQAVQVAGAPQSGQVRMTVGPEREFIGVGEIDDEGRVAPKRLVRYHDEHDEE.

The active-site Nucleophile is Asp49.

This sequence belongs to the pseudouridine synthase TruB family. Type 1 subfamily.

It catalyses the reaction uridine(55) in tRNA = pseudouridine(55) in tRNA. Responsible for synthesis of pseudouridine from uracil-55 in the psi GC loop of transfer RNAs. The chain is tRNA pseudouridine synthase B from Aeromonas salmonicida (strain A449).